We begin with the raw amino-acid sequence, 460 residues long: Bifunctional protein GlmU (460 aa).

A pyrophosphorylase region spans residues 1 to 232 (MALNVVILAA…AIEVEGANNR (232 aa)). UDP-N-acetyl-alpha-D-glucosamine contacts are provided by residues 8 to 11 (LAAG), Lys-22, Gln-73, 78 to 79 (GT), 100 to 102 (YGD), Gly-137, Glu-157, Asn-172, and Asn-230. Asp-102 provides a ligand contact to Mg(2+). Asn-230 contributes to the Mg(2+) binding site. The linker stretch occupies residues 233–253 (VQLAQLERAYQAREAEKLMLA). Positions 254-460 (GANLRDPSRI…GWQRPVKIKK (207 aa)) are N-acetyltransferase. UDP-N-acetyl-alpha-D-glucosamine is bound by residues Arg-336 and Lys-354. The Proton acceptor role is filled by His-366. UDP-N-acetyl-alpha-D-glucosamine is bound by residues Tyr-369 and Asn-380. Residues Ala-383, 389-390 (NY), Ser-408, Ala-426, and Arg-443 contribute to the acetyl-CoA site.

It in the N-terminal section; belongs to the N-acetylglucosamine-1-phosphate uridyltransferase family. In the C-terminal section; belongs to the transferase hexapeptide repeat family. As to quaternary structure, homotrimer. Requires Mg(2+) as cofactor.

It is found in the cytoplasm. The enzyme catalyses alpha-D-glucosamine 1-phosphate + acetyl-CoA = N-acetyl-alpha-D-glucosamine 1-phosphate + CoA + H(+). It catalyses the reaction N-acetyl-alpha-D-glucosamine 1-phosphate + UTP + H(+) = UDP-N-acetyl-alpha-D-glucosamine + diphosphate. Its pathway is nucleotide-sugar biosynthesis; UDP-N-acetyl-alpha-D-glucosamine biosynthesis; N-acetyl-alpha-D-glucosamine 1-phosphate from alpha-D-glucosamine 6-phosphate (route II): step 2/2. It participates in nucleotide-sugar biosynthesis; UDP-N-acetyl-alpha-D-glucosamine biosynthesis; UDP-N-acetyl-alpha-D-glucosamine from N-acetyl-alpha-D-glucosamine 1-phosphate: step 1/1. It functions in the pathway bacterial outer membrane biogenesis; LPS lipid A biosynthesis. Its function is as follows. Catalyzes the last two sequential reactions in the de novo biosynthetic pathway for UDP-N-acetylglucosamine (UDP-GlcNAc). The C-terminal domain catalyzes the transfer of acetyl group from acetyl coenzyme A to glucosamine-1-phosphate (GlcN-1-P) to produce N-acetylglucosamine-1-phosphate (GlcNAc-1-P), which is converted into UDP-GlcNAc by the transfer of uridine 5-monophosphate (from uridine 5-triphosphate), a reaction catalyzed by the N-terminal domain. The polypeptide is Bifunctional protein GlmU (Shewanella baltica (strain OS223)).